We begin with the raw amino-acid sequence, 161 residues long: Nucleotide-binding protein BMASAVP1_A0673 (161 aa).

It belongs to the YajQ family.

Functionally, nucleotide-binding protein. In Burkholderia mallei (strain SAVP1), this protein is Nucleotide-binding protein BMASAVP1_A0673.